A 183-amino-acid chain; its full sequence is MDIDPYKEFGASVELLSFLPSDFFPSVRDLLDTASALYREALESPEHCSPHHTALRQAILCWGELMNLATWVGSNLEDPASRELVVSYVNVNMGLKIRQLLWFHISCLTFGRETVLEYLVSFGVWIRTPPAYRPPNAPILSTLPETTVVRRRGRSPRRRTPSPRRRRSQSPRRRRSQSRESQC.

The disordered stretch occupies residues 136-183 (NAPILSTLPETTVVRRRGRSPRRRTPSPRRRRSQSPRRRRSQSRESQC). Over residues 149-176 (VRRRGRSPRRRTPSPRRRRSQSPRRRRS) the composition is skewed to basic residues. A phosphoserine; by host mark is found at Ser155, Ser162, and Ser170. A 1; half-length repeat occupies 155–161 (SPRRRTP). The 3 X 8 AA repeats of S-P-R-R-R-[PR]-S-Q stretch occupies residues 155–177 (SPRRRTPSPRRRRSQSPRRRRSQ). Positions 158–175 (RRTPSPRRRRSQSPRRRR) match the Bipartite nuclear localization signal motif. A run of 2 repeats spans residues 162–169 (SPRRRRSQ) and 170–177 (SPRRRRSQ). An RNA binding region spans residues 177 to 183 (QSRESQC).

Belongs to the orthohepadnavirus core antigen family. As to quaternary structure, homodimerizes, then multimerizes. Interacts with cytosol exposed regions of viral L glycoprotein present in the reticulum-to-Golgi compartment. Interacts with human FLNB. Phosphorylated form interacts with host importin alpha; this interaction depends on the exposure of the NLS, which itself depends upon genome maturation and/or phosphorylation of the capsid protein. Interacts with host NUP153. Phosphorylated by host SRPK1, SRPK2, and maybe protein kinase C or GAPDH. Phosphorylation is critical for pregenomic RNA packaging. Protein kinase C phosphorylation is stimulated by HBx protein and may play a role in transport of the viral genome to the nucleus at the late step during the viral replication cycle.

The protein resides in the virion. Its subcellular location is the host cytoplasm. Self assembles to form an icosahedral capsid. Most capsids appear to be large particles with an icosahedral symmetry of T=4 and consist of 240 copies of capsid protein, though a fraction forms smaller T=3 particles consisting of 180 capsid proteins. Entering capsids are transported along microtubules to the nucleus. Phosphorylation of the capsid is thought to induce exposure of nuclear localization signal in the C-terminal portion of the capsid protein that allows binding to the nuclear pore complex via the importin (karyopherin-) alpha and beta. Capsids are imported in intact form through the nuclear pore into the nuclear basket, where it probably binds NUP153. Only capsids that contain the mature viral genome can release the viral DNA and capsid protein into the nucleoplasm. Immature capsids get stuck in the basket. Capsids encapsulate the pre-genomic RNA and the P protein. Pre-genomic RNA is reverse-transcribed into DNA while the capsid is still in the cytoplasm. The capsid can then either be directed to the nucleus, providing more genomes for transcription, or bud through the endoplasmic reticulum to provide new virions. This is Capsid protein from Hepatitis B virus genotype B/C subtype adw (isolate Okinawa/pODW282/1998) (HBV-B).